Here is a 357-residue protein sequence, read N- to C-terminus: DENN domain-containing protein 10 (357 aa).

One can recognise a uDENN domain in the interval 1–140 (MAAAEVADTQ…TKGICQSEEN (140 aa)). The cDENN domain maps to 165–299 (QFGMETVILH…PEKSESHVIQ (135 aa)). A dDENN domain is found at 301–357 (IALKTREIFTNLAPFSEVSADGEKRVLNLEALKQKRFPPATENFLYHLAAAEQMLKI).

This sequence belongs to the DENND10 family. Interacts with the coiled-coil heterodimer of CCDC22 and CCDC93; the interaction is direct. Interacts with RAB27A and RAB27B (GDP-bound forms preferentially).

It localises to the late endosome. In terms of biological role, guanine nucleotide exchange factor (GEF) regulating homeostasis of late endocytic pathway, including endosomal positioning, maturation and secretion, possibly through activating Rab proteins such as RAB27A and RAB27B. Promotes the exchange of GDP to GTP, converting inactive GDP-bound RAB27A and RAB27B into their active GTP-bound form. This Homo sapiens (Human) protein is DENN domain-containing protein 10.